The primary structure comprises 720 residues: F-box/LRR-repeat MAX2 homolog (720 aa).

Residues 14–60 enclose the F-box domain; sequence SSAILDLPEPLLLHILSFLTDVRSRHRAALACGRMRAAERATRSELS. LRR repeat units follow at residues 71–134, 135–158, 159–189, 190–218, 219–247, 248–279, 280–316, 317–344, 345–372, 373–398, 399–435, 436–452, 453–510, 511–537, 538–571, 572–606, 607–644, and 645–720; these read LFLS…QNAF, IAAR…DPTT, LANL…PDGA, DLEP…DVVR, ALTT…FKSS, ELGP…VGDD, ALLS…ITVA, GLVA…EAAP, AMEA…KASW, LHLD…LTDA, SLAA…TLRP, TLKE…HTAE, CLTA…KCRY, MEFD…LLSP, LISA…PRTI, FGLS…GQMD, LSLW…SLTL, and PAVG…QIDD.

Associates to a SCF (SKP1-CUL1-F-box protein) E3 ubiquitin-protein ligase complex. Interacts with D14 in a strigolactone-dependent manner. Interacts with SKP1, SKP5 and SKP20. As to expression, expressed in leaves. Expressed in roots, culms, leaf blades, leaf sheaths, shoot bases and panicles.

The protein localises to the nucleus. Involved in strigolactone (SL) signaling. Required for responses to SLs and the establishment of arbuscular mycorrhiza symbiosis in rice. Strigolactone-dependent association of D3 with D14 and D53 (a repressor of SL signaling) triggers D53 ubiquitination and degradation. Controls tillering by suppressing axillary bud activity. Tiller is a specialized grain-bearing branch that is formed on the unelongated basal internode and grows independently of the mother stem (culm) by means of its own adventitious roots. This chain is F-box/LRR-repeat MAX2 homolog, found in Oryza sativa subsp. japonica (Rice).